Here is a 368-residue protein sequence, read N- to C-terminus: 1-deoxy-D-xylulose 5-phosphate reductoisomerase (368 aa).

NADPH contacts are provided by Thr7, Gly8, Ser9, Ile10, Gly31, Lys32, Asn33, and Asn113. Lys114 contacts 1-deoxy-D-xylulose 5-phosphate. Glu115 serves as a coordination point for NADPH. Asp133 is a Mn(2+) binding site. Ser134, Glu135, Ser158, and His181 together coordinate 1-deoxy-D-xylulose 5-phosphate. Residue Glu135 coordinates Mn(2+). Gly187 is a binding site for NADPH. 1-deoxy-D-xylulose 5-phosphate is bound by residues Ser194, Asn199, Lys200, and Glu203. Glu203 contacts Mn(2+).

The protein belongs to the DXR family. The cofactor is Mg(2+). Mn(2+) is required as a cofactor.

It catalyses the reaction 2-C-methyl-D-erythritol 4-phosphate + NADP(+) = 1-deoxy-D-xylulose 5-phosphate + NADPH + H(+). It participates in isoprenoid biosynthesis; isopentenyl diphosphate biosynthesis via DXP pathway; isopentenyl diphosphate from 1-deoxy-D-xylulose 5-phosphate: step 1/6. In terms of biological role, catalyzes the NADPH-dependent rearrangement and reduction of 1-deoxy-D-xylulose-5-phosphate (DXP) to 2-C-methyl-D-erythritol 4-phosphate (MEP). This is 1-deoxy-D-xylulose 5-phosphate reductoisomerase from Helicobacter pylori (strain Shi470).